We begin with the raw amino-acid sequence, 486 residues long: uncharacterized protein (486 aa).

This is an uncharacterized protein from Methanocaldococcus jannaschii (strain ATCC 43067 / DSM 2661 / JAL-1 / JCM 10045 / NBRC 100440) (Methanococcus jannaschii).